We begin with the raw amino-acid sequence, 412 residues long: Elongation factor 1-gamma 2 (412 aa).

Serine 2 is modified (N-acetylserine). The region spanning 2–77 (SQGTLYINRS…YLANQVADEK (76 aa)) is the GST N-terminal domain. Residues 86–217 (DVIEKSQILR…AEKALTYTPP (132 aa)) form the GST C-terminal domain. Residues 216 to 253 (PPKKQKAEKPKAEKSKAEKKKDEAKPADDAAPAKKPKH) are disordered. Basic and acidic residues predominate over residues 220 to 247 (QKAEKPKAEKSKAEKKKDEAKPADDAAP). Positions 251-412 (PKHPLEALGK…KEIVDGKVLK (162 aa)) constitute an EF-1-gamma C-terminal domain.

As to quaternary structure, the eukaryotic elongation factor 1 complex (eEF1) is probably a heterohexamer. Two trimeric complexes, each composed of eEF1A (TEF1 or TEF2), eEF1Balpha (EFB1) and eEF1Bgamma (CAM1 or TEF4), are probably dimerized via the eF1Bgamma subunits. The eEF1B subcomplex with the GEF activity is formed of eEF1Balpha and eEF1Bgamma. TEF4 interacts with EFB1.

It localises to the cytoplasm. Its pathway is protein biosynthesis; polypeptide chain elongation. Its function is as follows. Subunit of the eukaryotic elongation factor 1 complex (eEF1). Probably plays a role in anchoring the complex to other cellular components. The protein is Elongation factor 1-gamma 2 (TEF4) of Saccharomyces cerevisiae (strain ATCC 204508 / S288c) (Baker's yeast).